The sequence spans 688 residues: MAPAADPRSLLVLLQVLGLALAQIRGLPGEPGPPGPPGPPGVPGSDGIDGDKGPPGKAGPPGPKGEPGKAGTDGPDGKPGIDGLTGAKGEPGPAGIPGVKGQPGLPGPPGLPGPGFAGPPGPPGPVGLPGEIGLTGPKGDPGPEGPSGPPGPPGKPGRPGTIQGLEGSADFLCPTNCPAGVKGPPGLQGVKGHPGRRGLLGDSGRQGKPGPKGDVGASGEQGIPGPPGPQGVRGYPGMAGPKGETGPQGYKGMVGSVGAAGSPGEEGPRGPPGRAGEKGDVGSQGVRGPQGITGPKGATGPPGIDGKDGTPGTPGVKGSAGQAGRPGNPGHQGLAGVPGMPGTKGGPGDKGEPGRQGFPGVSGPPGKEGEPGPRGEIGPQGIMGQKGDHGERGPVGQPGPQGRQGPKGEQGPPGIPGPQGLPGIKGDKGSPGKTGPRGGVGDPGVAGLPGEKGEKGESGEPGPKGQQGVRGEPGYPGPSGDAGAPGVQGYPGPPGPRGLVGDRGLPGQPGRQGVAGRDASDQHIEDVVLKMLQEQLAEMAVSAKREALGATGMMGPPGPPGPPGYPGKQGPHGHPGPRGVPGIVGAVGQIGNTGPKGKRGEKGDQGEVGRGHPGMPGPPGIPGLPGRPGQAINGKDGDRGAPGAPGEAGRPGLPGPIGLPGFCEPAACLGASAYASGRLTEPGSIKGP.

The signal sequence occupies residues 1-22; that stretch reads MAPAADPRSLLVLLQVLGLALA. Residues 26–162 are triple-helical region 4 (COL4); the sequence is GLPGEPGPPG…PGKPGRPGTI (137 aa). Disordered stretches follow at residues 26–520, 549–578, and 590–662; these read GLPG…RDAS, GATGMMGPPGPPGPPGYPGKQGPHGHPGPR, and IGNT…LPGF. 2 stretches are compositionally biased toward pro residues: residues 30-42 and 105-126; these read EPGPPGPPGPPGV and LPGPPGLPGPGFAGPPGPPGPV. The span at 128–138 shows a compositional bias: low complexity; sequence LPGEIGLTGPK. Positions 143-156 are enriched in pro residues; it reads PEGPSGPPGPPGKP. The residue at position 159 (proline 159) is a 4-hydroxyproline. Residues 163–179 are nonhelical region 4 (NC4); sequence QGLEGSADFLCPTNCPA. O-linked (Xyl...) (glycosaminoglycan) serine glycosylation occurs at serine 168. Residues 180 to 518 form a triple-helical region 3 (COL3) region; that stretch reads GVKGPPGLQG…PGRQGVAGRD (339 aa). Lysine 182 is modified (5-hydroxylysine). Lysine 182 carries O-linked (Gal...) hydroxylysine glycosylation. 2 stretches are compositionally biased toward low complexity: residues 251-265 and 394-412; these read KGMVGSVGAAGSPGE and PVGQPGPQGRQGPKGEQGP. Residues 435–444 show a composition bias toward gly residues; it reads GPRGGVGDPG. Residues 497–506 show a composition bias toward low complexity; sequence RGLVGDRGLP. The interval 519-548 is nonhelical region 3 (NC3); that stretch reads ASDQHIEDVVLKMLQEQLAEMAVSAKREAL. The triple-helical region 2 (COL2) stretch occupies residues 549-631; sequence GATGMMGPPG…PGLPGRPGQA (83 aa). Positions 556-565 are enriched in pro residues; the sequence is PPGPPGPPGY. A compositionally biased stretch (basic and acidic residues) spans 598–610; the sequence is KRGEKGDQGEVGR. The segment at 632–633 is nonhelical region 2 (NC2); sequence IN. The tract at residues 634 to 663 is triple-helical region 1 (COL1); the sequence is GKDGDRGAPGAPGEAGRPGLPGPIGLPGFC. The span at 641 to 651 shows a compositional bias: low complexity; the sequence is APGAPGEAGRP. The interval 664–688 is nonhelical region 1 (NC1); it reads EPAACLGASAYASGRLTEPGSIKGP.

The protein belongs to the fibril-associated collagens with interrupted helices (FACIT) family. In terms of assembly, heterotrimer of an alpha 1(IX), an alpha 2(IX) and an alpha 3(IX) chain. The chains are linked to each other by interchain disulfide bonds. Trimers are also cross-linked via hydroxylysines. Prolines at the third position of the tripeptide repeating unit (G-X-Y) are hydroxylated in some or all of the chains. In terms of processing, covalently linked to the telopeptides of type II collagen by hydroxylysine-derived cross-links.

The protein localises to the secreted. The protein resides in the extracellular space. Its subcellular location is the extracellular matrix. Its function is as follows. Structural component of hyaline cartilage and vitreous of the eye. The polypeptide is Collagen alpha-2(IX) chain (Bos taurus (Bovine)).